The sequence spans 187 residues: Phosphatidylethanolamine-binding protein 1 (187 aa).

Serine 13 bears the Phosphoserine mark. Phosphothreonine is present on threonine 42. Phosphoserine occurs at positions 52, 98, and 153. Residues 93–134 are interaction with RAF1; that stretch reads KGNDISSGTVLSDYVGSGPPKGTGLHRYVWLVYEQSGPLKCD.

The protein belongs to the phosphatidylethanolamine-binding protein family. Has a tendency to form dimers by disulfide cross-linking. Interacts with RAF1 and this interaction is enhanced if RAF1 is phosphorylated on residues 'Ser-338', 'Ser-339', 'Tyr-340' and 'Tyr-341'. Interacts with ALOX15; in response to IL13/interleukin-13, prevents the interaction of PEBP1 with RAF1 to activate the ERK signaling cascade.

The protein localises to the cytoplasm. Functionally, binds ATP, opioids and phosphatidylethanolamine. Has lower affinity for phosphatidylinositol and phosphatidylcholine. Serine protease inhibitor which inhibits thrombin, neuropsin and chymotrypsin but not trypsin, tissue type plasminogen activator and elastase. Involved in the positive regulation of epithelial cell migration. Inhibits the kinase activity of RAF1 by inhibiting its activation and by dissociating the RAF1/MEK complex and acting as a competitive inhibitor of MEK phosphorylation. HCNP may be involved in the function of the presynaptic cholinergic neurons of the central nervous system. HCNP increases the production of choline acetyltransferase but not acetylcholinesterase. Seems to be mediated by a specific receptor. This chain is Phosphatidylethanolamine-binding protein 1 (PEBP1), found in Canis lupus familiaris (Dog).